We begin with the raw amino-acid sequence, 90 residues long: Small ribosomal subunit protein bS16 (90 aa).

This sequence belongs to the bacterial ribosomal protein bS16 family.

This Bacillus cytotoxicus (strain DSM 22905 / CIP 110041 / 391-98 / NVH 391-98) protein is Small ribosomal subunit protein bS16.